Reading from the N-terminus, the 529-residue chain is Autophagy-related protein 21 (529 aa).

The span at 49 to 62 shows a compositional bias: polar residues; the sequence is NSLEDSAGCQNPTH. Positions 49–70 are disordered; the sequence is NSLEDSAGCQNPTHSKTDSQDT. WD repeat units follow at residues 271-311 and 321-361; these read AHHS…GKVK and GHNL…SDIC. The short motif at 318–322 is the L/FRRG motif element; it reads LRRGH. Positions 362-388 are disordered; that stretch reads TNENSEDRTNHNSDYEDSDGDTSKSSE. A compositionally biased stretch (basic and acidic residues) spans 366 to 375; that stretch reads SEDRTNHNSD.

This sequence belongs to the WD repeat PROPPIN family.

It localises to the cytoplasm. Its subcellular location is the membrane. It is found in the vacuole membrane. In terms of biological role, required for cytoplasm to vacuole transport (Cvt) vesicles formation and mitophagy. Involved in binding of phosphatidylethanolamine to ATG8 and in recruitment of ATG8 and ATG5 to the pre-autophagosomal structure. Protects ATG8 from ARG4-mediated cleavage. This is Autophagy-related protein 21 (ATG21) from Candida albicans (strain SC5314 / ATCC MYA-2876) (Yeast).